The sequence spans 270 residues: Flagellar hook-basal body complex protein FlhO (270 aa).

Belongs to the flagella basal body rod proteins family.

In terms of biological role, not required for motility. This is Flagellar hook-basal body complex protein FlhO (flhO) from Bacillus subtilis (strain 168).